Here is a 182-residue protein sequence, read N- to C-terminus: Dihydrofolate reductase (182 aa).

Residues 3-180 form the DHFR domain; that stretch reads RFNLIVAVCE…IKFEYKILEK (178 aa). Residues alanine 9 and 15–21 contribute to the NADP(+) site; that span reads GIGIRGD. 29–34 contributes to the substrate binding site; that stretch reads ELKYFS. 53 to 55 lines the NADP(+) pocket; sequence RKT. Substrate is bound at residue arginine 69. NADP(+) contacts are provided by residues 75–77 and 113–120; these read STT and GGSGVYEE.

This sequence belongs to the dihydrofolate reductase family. In terms of assembly, monomer. Interacts with vg.

It catalyses the reaction (6S)-5,6,7,8-tetrahydrofolate + NADP(+) = 7,8-dihydrofolate + NADPH + H(+). It functions in the pathway cofactor biosynthesis; tetrahydrofolate biosynthesis; 5,6,7,8-tetrahydrofolate from 7,8-dihydrofolate: step 1/1. In terms of biological role, by interacting with vestigial (vg), may control genes involved in DNA replication. Its function is as follows. Key enzyme in folate metabolism. Catalyzes an essential reaction for de novo glycine and purine synthesis, and for DNA precursor synthesis. This Drosophila melanogaster (Fruit fly) protein is Dihydrofolate reductase (Dhfr).